Consider the following 274-residue polypeptide: 2,3,4,5-tetrahydropyridine-2,6-dicarboxylate N-succinyltransferase (274 aa).

Residues Arg106 and Asp143 each contribute to the substrate site.

Belongs to the transferase hexapeptide repeat family. As to quaternary structure, homotrimer.

Its subcellular location is the cytoplasm. It carries out the reaction (S)-2,3,4,5-tetrahydrodipicolinate + succinyl-CoA + H2O = (S)-2-succinylamino-6-oxoheptanedioate + CoA. It functions in the pathway amino-acid biosynthesis; L-lysine biosynthesis via DAP pathway; LL-2,6-diaminopimelate from (S)-tetrahydrodipicolinate (succinylase route): step 1/3. The chain is 2,3,4,5-tetrahydropyridine-2,6-dicarboxylate N-succinyltransferase from Herminiimonas arsenicoxydans.